Here is a 320-residue protein sequence, read N- to C-terminus: Cytochrome f (320 aa).

The first 35 residues, 1 to 35, serve as a signal peptide directing secretion; that stretch reads MQTINTFSWINQRITRSISVLLLVYIITRTSISSA. 4 residues coordinate heme: Tyr-36, Cys-56, Cys-59, and His-60. The chain crosses the membrane as a helical span at residues 286–306; sequence VQGLLFFLASVILAQIFLVLK.

It belongs to the cytochrome f family. As to quaternary structure, the 4 large subunits of the cytochrome b6-f complex are cytochrome b6, subunit IV (17 kDa polypeptide, petD), cytochrome f and the Rieske protein, while the 4 small subunits are PetG, PetL, PetM and PetN. The complex functions as a dimer. It depends on heme as a cofactor.

It localises to the plastid thylakoid membrane. Functionally, component of the cytochrome b6-f complex, which mediates electron transfer between photosystem II (PSII) and photosystem I (PSI), cyclic electron flow around PSI, and state transitions. This chain is Cytochrome f, found in Cuscuta exaltata (Tall dodder).